The chain runs to 910 residues: MQRHELPPGRRSPATRITLLAILLFLLFGLRSFAGYAIEIEWWKELGQLNTWFSMLYYGIAPVAVATLVAFLALWISHARALKFAGTGLGEHKLYARISTLALLFLAWFIAAGAIDTWTVVRFAGSRGLPAAAAGWHDNIFNKPLSFYLFDLPFYSLLRSYVLAVIIFCVLLYWIAARGWQLRFRMPHLRDAQELDPAFFKLEGGLESRFLRGAAVIGLIALAVRFYLGRYEMAYNEHGSFLVGIDYVDQNIGLPLQWLVIFACLAAAAFVAMGRWFLAALMALALVVDFAAPRIVSALYVRPNEISLQRPYIETHIHATRSAFGIEQNVREVEFKAKPEAPIDVAANKPLLDNVRLWDTRAFHDTVTQIQALRPYYVFADTDVDRYTIDGQYRQVLLTPRELDLRQLPAARANWINPAFIYTHGYGVVLAPVSQITPDGLPVLFIENAPPEVKASSLKLTRPELYYGEVTHEPVFVDTAREEFNYPSGESNVTSRYEGKGGFPISSLGMRMAAAIREGEPNILLTSYLKPNSRMMIHRKVEDRLHELAGFLEWDSDPYLVITDAGRLVWMIDGYTTSEAHPYARSVDVPDIGRVNYIRNAVKATVDAYDGETHMYVFAPDDPIISAYQRLFPDLFQPSDKMPADLRRHARYPETLFRAQAEIYRTYHMLDPQSFYNKEDLWDLARHTTAQNGGAEPVTPTYVVATLPGEAKPEFLLLIPFTPRNKDNLIGLMVARCDGKSLGDMVVLQLSKQELIFGPMQIGARINQDQTISKDLTLWNQQGSQVLRGQILVLPVGNTFLYVDPIYIQATEARMPQLKKIVLAVGNRLIYADTYDQALAQLSSGAQALVTEATAPGSSTAPKAAAVAPATGDARLQSVRDHLRRYRELASQGKWSDAGKELEAIEALVK.

The next 7 helical transmembrane spans lie at 17–37 (ITLL…AGYA), 56–76 (LYYG…ALWI), 101–121 (LALL…WTVV), 157–177 (LLRS…WIAA), 210–229 (FLRG…FYLG), 252–272 (IGLP…AFVA), and 276–296 (WFLA…PRIV).

The protein belongs to the UPF0182 family.

It localises to the cell membrane. This chain is UPF0182 protein Acid_6445, found in Solibacter usitatus (strain Ellin6076).